The following is a 413-amino-acid chain: D-nopaline dehydrogenase (413 aa).

It belongs to the lysopine/nopaline/octopine/opine/vitopine dehydrogenases family. In terms of assembly, homotetramer.

The catalysed reaction is D-nopaline + NADP(+) + H2O = L-arginine + 2-oxoglutarate + NADPH + H(+). This is D-nopaline dehydrogenase (nos) from Agrobacterium tumefaciens (strain T37).